A 450-amino-acid polypeptide reads, in one-letter code: MLDKLGQNLSEALNKIKNATFVDKKLVKEVIKDIQKALIQSDVNVKLVFNMSKEIERKAIEEAPPKGLSKKEHIVKIVYDELVKLLGETIQKLELDASKKSVILLIGIQGSGKTTSAAKLARYIQKKGLRPGLIAADVYRPAAYQQLKQLSEKINVPLFGDETRTKTPVDITKEGMEKLKKVDVIIIDTAGRHKEEEGLLAEMKEMKDLTNPNEIILVIDGTLGQQAKNQAKAFKDSVSEIGSILVTKLDGSAKGGGALSAVAEINAPIKFIGTGEGVDNLEQFDPKKFISRILGFGDLDSLLEKTEDIMDESAEESIDSILKGKFTLIELYAQLETISKMGPMKQILSMIPGMGGNMPKEAAQLTEDKLKRYKIMMDSMTMEEKENPELIKTSRLQRIARGAGVKPEEIKDLLKYYSTTKNAFGNLKRGKMPKMGGQMGQIMRQLMYKD.

GTP is bound by residues 107 to 114 (GIQGSGKT), 188 to 192 (DTAGR), and 247 to 250 (TKLD).

The protein belongs to the GTP-binding SRP family. SRP54 subfamily. In terms of assembly, part of the signal recognition particle protein translocation system, which is composed of SRP and FtsY. Archaeal SRP consists of a 7S RNA molecule of 300 nucleotides and two protein subunits: SRP54 and SRP19.

The protein resides in the cytoplasm. The enzyme catalyses GTP + H2O = GDP + phosphate + H(+). Involved in targeting and insertion of nascent membrane proteins into the cytoplasmic membrane. Binds to the hydrophobic signal sequence of the ribosome-nascent chain (RNC) as it emerges from the ribosomes. The SRP-RNC complex is then targeted to the cytoplasmic membrane where it interacts with the SRP receptor FtsY. This is Signal recognition particle 54 kDa protein from Methanococcus maripaludis (strain C6 / ATCC BAA-1332).